The following is a 607-amino-acid chain: UvrABC system protein C (607 aa).

The GIY-YIG domain occupies 11–89 (CKPGVYRFED…IKEFAPPCNV (79 aa)). One can recognise a UVR domain in the interval 201–236 (SSLLESLKKKMLKASKNKEYEEAAILRDKIQAAQTV).

The protein belongs to the UvrC family. In terms of assembly, interacts with UvrB in an incision complex.

It is found in the cytoplasm. Its function is as follows. The UvrABC repair system catalyzes the recognition and processing of DNA lesions. UvrC both incises the 5' and 3' sides of the lesion. The N-terminal half is responsible for the 3' incision and the C-terminal half is responsible for the 5' incision. The chain is UvrABC system protein C from Tropheryma whipplei (strain Twist) (Whipple's bacillus).